The following is a 220-amino-acid chain: RNA polymerase sigma GP28 factor (220 aa).

Sigma factors are initiation factors that promote the attachment of RNA polymerase to specific initiation sites and are then released. This sigma factor is responsible for the expression of the phage middle genes. This Bacillus subtilis (Bacteriophage SP01) protein is RNA polymerase sigma GP28 factor (28).